The following is a 357-amino-acid chain: Histidinol-phosphate aminotransferase 2 (357 aa).

N6-(pyridoxal phosphate)lysine is present on Lys215.

The protein belongs to the class-II pyridoxal-phosphate-dependent aminotransferase family. Histidinol-phosphate aminotransferase subfamily. Homodimer. Requires pyridoxal 5'-phosphate as cofactor.

The catalysed reaction is L-histidinol phosphate + 2-oxoglutarate = 3-(imidazol-4-yl)-2-oxopropyl phosphate + L-glutamate. It functions in the pathway amino-acid biosynthesis; L-histidine biosynthesis; L-histidine from 5-phospho-alpha-D-ribose 1-diphosphate: step 7/9. This Thiobacillus denitrificans (strain ATCC 25259 / T1) protein is Histidinol-phosphate aminotransferase 2.